Reading from the N-terminus, the 607-residue chain is ATP-dependent RNA helicase-like protein DB10 (607 aa).

Over residues 1-10 the composition is skewed to polar residues; that stretch reads MAVVTASSAG. 2 disordered regions span residues 1-25 and 66-108; these read MAVVTASSAGPSYAPEDPTLPKPWK and VFVS…DGTS. One can recognise a WW domain in the interval 18 to 52; that stretch reads PTLPKPWKGLVDGTTGFIYFWNPETNDTQYERPVP. Positions 89-98 are enriched in polar residues; the sequence is RGSNNKIARS. Basic and acidic residues predominate over residues 99-108; the sequence is SSDRFHDGTS. The Q motif motif lies at 145–173; that stretch reads TSFEATGFPSEIVREMHQAGFSAPTPIQA. Positions 176 to 350 constitute a Helicase ATP-binding domain; the sequence is WPIALQGRDI…ADLLVNSVQV (175 aa). Position 189–196 (189–196) interacts with ATP; that stretch reads AKTGSGKT. The DEAD box motif lies at 298–301; the sequence is DEAD. A Helicase C-terminal domain is found at 379 to 523; the sequence is RVEQILRSKE…CVPTELRDMA (145 aa). The tract at residues 519 to 607 is disordered; it reads LRDMASRGGG…WSGKKSRFTD (89 aa). The segment covering 538–548 has biased composition (gly residues); the sequence is SGPGGRGGRGG. A compositionally biased stretch (basic and acidic residues) spans 562–574; it reads GYDRGSRDSDRYG.

It belongs to the DEAD box helicase family.

It carries out the reaction ATP + H2O = ADP + phosphate + H(+). This Nicotiana sylvestris (Wood tobacco) protein is ATP-dependent RNA helicase-like protein DB10.